A 588-amino-acid chain; its full sequence is Transport ATP-binding protein AarD (588 aa).

Positions 24 to 316 (LRISMLLGVV…LGTYYHAKAQ (293 aa)) constitute an ABC transmembrane type-1 domain. A run of 6 helical transmembrane segments spans residues 29–49 (LLGVVSGLLIIAQAWFLAVIL), 62–82 (LLTPFILLLAVFVLRALLTVI), 149–169 (IIPIMILIAIFPFNWAAALIL), 170–190 (FATAPLIPIFMALVGLGAADA), 250–270 (SGVLEFFASISIAIVAVYFGF), and 276–296 (LNFGSYGLPVTMFAGFLALIL). The ABC transporter domain occupies 350-583 (IEANKLEIYS…EGPFARLLAH (234 aa)). 383 to 390 (GQSGAGKS) contacts ATP.

The protein belongs to the ABC transporter superfamily.

The protein localises to the cell inner membrane. Somehow involved in the cytochrome D branch of aerobic respiration. Seems to be a component of a transport system. This chain is Transport ATP-binding protein AarD (aarD), found in Providencia stuartii.